An 87-amino-acid chain; its full sequence is Elongation factor Ts, chloroplastic (87 aa).

This sequence belongs to the EF-Ts family.

It is found in the plastid. Its subcellular location is the chloroplast. Associates with the EF-Tu.GDP complex and induces the exchange of GDP to GTP. It remains bound to the aminoacyl-tRNA.EF-Tu.GTP complex up to the GTP hydrolysis stage on the ribosome. In Antithamnion sp. (Red alga), this protein is Elongation factor Ts, chloroplastic (tsf).